Consider the following 341-residue polypeptide: Endolytic peptidoglycan transglycosylase RlpA (341 aa).

A signal peptide spans 1–26; it reads MSKRVRSSLILPAVCGLGLAAVLLSS. The N-palmitoyl cysteine moiety is linked to residue cysteine 27. Cysteine 27 carries S-diacylglycerol cysteine lipidation. Residues 260-341 form the SPOR domain; the sequence is SLPADGLYLQ…LGQPTLVRPD (82 aa).

Belongs to the RlpA family.

It localises to the cell membrane. Functionally, lytic transglycosylase with a strong preference for naked glycan strands that lack stem peptides. Required for efficient separation of daughter cells and maintenance of rod shape. This is Endolytic peptidoglycan transglycosylase RlpA from Pseudomonas aeruginosa (strain UCBPP-PA14).